The sequence spans 251 residues: 3-deoxy-manno-octulosonate cytidylyltransferase (251 aa).

It belongs to the KdsB family.

The protein resides in the cytoplasm. The enzyme catalyses 3-deoxy-alpha-D-manno-oct-2-ulosonate + CTP = CMP-3-deoxy-beta-D-manno-octulosonate + diphosphate. It functions in the pathway nucleotide-sugar biosynthesis; CMP-3-deoxy-D-manno-octulosonate biosynthesis; CMP-3-deoxy-D-manno-octulosonate from 3-deoxy-D-manno-octulosonate and CTP: step 1/1. It participates in bacterial outer membrane biogenesis; lipopolysaccharide biosynthesis. Functionally, activates KDO (a required 8-carbon sugar) for incorporation into bacterial lipopolysaccharide in Gram-negative bacteria. This Rhizobium leguminosarum bv. trifolii (strain WSM2304) protein is 3-deoxy-manno-octulosonate cytidylyltransferase.